Consider the following 207-residue polypeptide: Imidazole glycerol phosphate synthase subunit HisH (207 aa).

Residues 1 to 206 enclose the Glutamine amidotransferase type-1 domain; the sequence is MMIVIDYDAG…KEYVYENTAR (206 aa). The active-site Nucleophile is the Cys79. Residues His181 and Glu183 contribute to the active site.

Heterodimer of HisH and HisF.

The protein resides in the cytoplasm. The catalysed reaction is 5-[(5-phospho-1-deoxy-D-ribulos-1-ylimino)methylamino]-1-(5-phospho-beta-D-ribosyl)imidazole-4-carboxamide + L-glutamine = D-erythro-1-(imidazol-4-yl)glycerol 3-phosphate + 5-amino-1-(5-phospho-beta-D-ribosyl)imidazole-4-carboxamide + L-glutamate + H(+). The enzyme catalyses L-glutamine + H2O = L-glutamate + NH4(+). Its pathway is amino-acid biosynthesis; L-histidine biosynthesis; L-histidine from 5-phospho-alpha-D-ribose 1-diphosphate: step 5/9. Functionally, IGPS catalyzes the conversion of PRFAR and glutamine to IGP, AICAR and glutamate. The HisH subunit catalyzes the hydrolysis of glutamine to glutamate and ammonia as part of the synthesis of IGP and AICAR. The resulting ammonia molecule is channeled to the active site of HisF. This chain is Imidazole glycerol phosphate synthase subunit HisH, found in Streptococcus sanguinis (strain SK36).